The primary structure comprises 251 residues: Hydroxyacylglutathione hydrolase (251 aa).

Zn(2+)-binding residues include His-53, His-55, Asp-57, His-58, His-110, Asp-127, and His-165.

The protein belongs to the metallo-beta-lactamase superfamily. Glyoxalase II family. Monomer. The cofactor is Zn(2+).

It catalyses the reaction an S-(2-hydroxyacyl)glutathione + H2O = a 2-hydroxy carboxylate + glutathione + H(+). It functions in the pathway secondary metabolite metabolism; methylglyoxal degradation; (R)-lactate from methylglyoxal: step 2/2. Thiolesterase that catalyzes the hydrolysis of S-D-lactoyl-glutathione to form glutathione and D-lactic acid. This Erwinia tasmaniensis (strain DSM 17950 / CFBP 7177 / CIP 109463 / NCPPB 4357 / Et1/99) protein is Hydroxyacylglutathione hydrolase.